Consider the following 345-residue polypeptide: S-adenosylmethionine:tRNA ribosyltransferase-isomerase (345 aa).

It belongs to the QueA family. As to quaternary structure, monomer.

It localises to the cytoplasm. It carries out the reaction 7-aminomethyl-7-carbaguanosine(34) in tRNA + S-adenosyl-L-methionine = epoxyqueuosine(34) in tRNA + adenine + L-methionine + 2 H(+). It participates in tRNA modification; tRNA-queuosine biosynthesis. In terms of biological role, transfers and isomerizes the ribose moiety from AdoMet to the 7-aminomethyl group of 7-deazaguanine (preQ1-tRNA) to give epoxyqueuosine (oQ-tRNA). The polypeptide is S-adenosylmethionine:tRNA ribosyltransferase-isomerase (Shewanella oneidensis (strain ATCC 700550 / JCM 31522 / CIP 106686 / LMG 19005 / NCIMB 14063 / MR-1)).